Here is a 340-residue protein sequence, read N- to C-terminus: 4-amino-5-hydroxymethyl-2-methylpyrimidine phosphate synthase THI11 (340 aa).

Lysine 62 bears the N6-(pyridoxal phosphate)lysine mark. Histidine 66 is an active-site residue. 115 to 118 (GEFG) contributes to the pyridoxal 5'-phosphate binding site. Positions 195 to 199 (CCCFC) match the CCCFC; essential for catalytic activity, may be the site of iron coordination motif.

It belongs to the NMT1/THI5 family. As to quaternary structure, homodimer. The cofactor is Fe cation.

The catalysed reaction is N(6)-(pyridoxal phosphate)-L-lysyl-[4-amino-5-hydroxymethyl-2-methylpyrimidine phosphate synthase] + L-histidyl-[4-amino-5-hydroxymethyl-2-methylpyrimidine phosphate synthase] + 2 Fe(3+) + 4 H2O = L-lysyl-[4-amino-5-hydroxymethyl-2-methylpyrimidine phosphate synthase] + (2S)-2-amino-5-hydroxy-4-oxopentanoyl-[4-amino-5-hydroxymethyl-2-methylpyrimidine phosphate synthase] + 4-amino-2-methyl-5-(phosphooxymethyl)pyrimidine + 3-oxopropanoate + 2 Fe(2+) + 2 H(+). It functions in the pathway cofactor biosynthesis; thiamine diphosphate biosynthesis. Functionally, responsible for the formation of the pyrimidine heterocycle in the thiamine biosynthesis pathway. Catalyzes the formation of hydroxymethylpyrimidine phosphate (HMP-P) from histidine and pyridoxal phosphate (PLP). The protein uses PLP and the active site histidine to form HMP-P, generating an inactive enzyme. The enzyme can only undergo a single turnover, which suggests it is a suicide enzyme. The sequence is that of 4-amino-5-hydroxymethyl-2-methylpyrimidine phosphate synthase THI11 from Saccharomyces cerevisiae (strain ATCC 204508 / S288c) (Baker's yeast).